The sequence spans 456 residues: Alcohol acyltransferase 1 (456 aa).

Residues His-166 and Asp-382 each act as proton acceptor in the active site.

Belongs to the plant acyltransferase family. As to expression, expressed in fruit.

The catalysed reaction is 3-(methylsulfanyl)propanoyl-CoA + butan-1-ol = butyl 3-(methylsulfanyl)propanoate + CoA. The enzyme catalyses ethanol + benzoyl-CoA = ethyl benzoate + CoA. It carries out the reaction butan-1-ol + benzoyl-CoA = butyl benzoate + CoA. It catalyses the reaction 2-(methylsulfanyl)acetyl-CoA + butan-1-ol = butyl 2-(methylsulfanyl)acetate + CoA. Its function is as follows. Involved in the biosynthesis of volatile esters which confer kiwifruit flavor. Alcohol acyl transferase that can use a wide range of alcohols as substrate to produce esters. Exhibits benzoyl-CoA:alcohol O-acyltransferase activity. The chain is Alcohol acyltransferase 1 from Actinidia deliciosa (Kiwi).